A 98-amino-acid chain; its full sequence is NADH-ubiquinone oxidoreductase chain 4L (98 aa).

The next 3 helical transmembrane spans lie at 1–21 (MSMV…GLLM), 29–49 (SLLC…VTIL), and 61–81 (IILL…LVMV).

This sequence belongs to the complex I subunit 4L family. Core subunit of respiratory chain NADH dehydrogenase (Complex I) which is composed of 45 different subunits.

The protein resides in the mitochondrion inner membrane. The enzyme catalyses a ubiquinone + NADH + 5 H(+)(in) = a ubiquinol + NAD(+) + 4 H(+)(out). In terms of biological role, core subunit of the mitochondrial membrane respiratory chain NADH dehydrogenase (Complex I) which catalyzes electron transfer from NADH through the respiratory chain, using ubiquinone as an electron acceptor. Part of the enzyme membrane arm which is embedded in the lipid bilayer and involved in proton translocation. This chain is NADH-ubiquinone oxidoreductase chain 4L (MT-ND4L), found in Phoca fasciata (Ribbon seal).